The primary structure comprises 276 residues: MLPDRVLEILNEMKAERIRGATWLARKGAEAFLALAEELDEALLEDAIRELRSRIIEVNPSMASLYNLARFMPITNNRELVKMRALEFLRRMDEAKRELASIGAQLIDDGDVIITHSFSSSVLEIFKVAKDRRKSFKVIITESSPDYEGLHLANELENLGIEFEVITDSQMGLFCRKATISMVGADMVTRDGFVVNKAGTYLLALACHESDVPFYVAAETYKFHPTVKSNEVVLHERDFSRSGFRVRNVLFDLTPWKFIRGIITELGIVIPPRDIQ.

Belongs to the eIF-2B alpha/beta/delta subunits family. Complex of two different subunits.

In terms of biological role, catalyzes the exchange of initiation factor 2-bound GDP for GTP. The polypeptide is Putative translation initiation factor eIF-2B subunit 2-like (Pyrococcus abyssi (strain GE5 / Orsay)).